We begin with the raw amino-acid sequence, 131 residues long: Large ribosomal subunit protein bL17 (131 aa).

The protein belongs to the bacterial ribosomal protein bL17 family. As to quaternary structure, part of the 50S ribosomal subunit. Contacts protein L32.

This is Large ribosomal subunit protein bL17 from Cupriavidus pinatubonensis (strain JMP 134 / LMG 1197) (Cupriavidus necator (strain JMP 134)).